We begin with the raw amino-acid sequence, 366 residues long: tRNA/tmRNA (uracil-C(5))-methyltransferase (366 aa).

Residues Q188, Y216, N221, E237, and D297 each contribute to the S-adenosyl-L-methionine site. Catalysis depends on C322, which acts as the Nucleophile. Catalysis depends on E356, which acts as the Proton acceptor.

This sequence belongs to the class I-like SAM-binding methyltransferase superfamily. RNA M5U methyltransferase family. TrmA subfamily.

It carries out the reaction uridine(54) in tRNA + S-adenosyl-L-methionine = 5-methyluridine(54) in tRNA + S-adenosyl-L-homocysteine + H(+). The catalysed reaction is uridine(341) in tmRNA + S-adenosyl-L-methionine = 5-methyluridine(341) in tmRNA + S-adenosyl-L-homocysteine + H(+). Its function is as follows. Dual-specificity methyltransferase that catalyzes the formation of 5-methyluridine at position 54 (m5U54) in all tRNAs, and that of position 341 (m5U341) in tmRNA (transfer-mRNA). This chain is tRNA/tmRNA (uracil-C(5))-methyltransferase, found in Histophilus somni (strain 129Pt) (Haemophilus somnus).